The following is a 259-amino-acid chain: Protein IQ-DOMAIN 10 (259 aa).

Positions 18–39 (KNKSNRGNVHSETSNRVKPVES) are disordered. In terms of domain architecture, IQ spans 50 to 77 (EVAVIRIQKAFRAFKARKRLCSLKSARR). The tract at residues 61–71 (RAFKARKRLCS) is calmodulin-binding. The segment at 226–259 (KPSKKPEKSSPNNVITKTSAKPDEVGNSKKPGSG) is disordered.

The protein belongs to the IQD family. In terms of assembly, binds to multiple calmodulin (CaM) in the presence of Ca(2+) and CaM-like proteins.

It localises to the nucleus. It is found in the cytoplasm. Its subcellular location is the cytoskeleton. May be involved in cooperative interactions with calmodulins or calmodulin-like proteins. Recruits calmodulin proteins to microtubules, thus being a potential scaffold in cellular signaling and trafficking. May associate with nucleic acids and regulate gene expression at the transcriptional or post-transcriptional level. This chain is Protein IQ-DOMAIN 10, found in Arabidopsis thaliana (Mouse-ear cress).